Reading from the N-terminus, the 185-residue chain is Photosystem I assembly protein Ycf4 (185 aa).

Transmembrane regions (helical) follow at residues 24–44 (YIIG…SISS) and 66–86 (IIMG…WYLV).

The protein belongs to the Ycf4 family.

Its subcellular location is the cellular thylakoid membrane. In terms of biological role, seems to be required for the assembly of the photosystem I complex. This chain is Photosystem I assembly protein Ycf4, found in Prochlorococcus marinus (strain MIT 9301).